Reading from the N-terminus, the 563-residue chain is Beta-catenin-like protein 1 (563 aa).

Residue methionine 1 is modified to N-acetylmethionine. Positions 1–49 (MDVGELLSYQPNRGTKRPRDDEEEELKMRRRQAGTRERGRYREEEMTVV) are disordered. The Nuclear localization signal motif lies at 16 to 33 (KRPRDDEEEELKMRRRQA). The span at 34-45 (GTRERGRYREEE) shows a compositional bias: basic and acidic residues. HEAT repeat units follow at residues 79 to 129 (ESSV…VVAT) and 134 to 176 (YHLL…TLHE). Lysine 91 bears the N6-acetyllysine mark. Residues 130–140 (MPDLYHLLVEL) carry the Nuclear export signal (NES) motif. 5 ARM repeats span residues 178–228 (EEGA…MAEF), 229–273 (RPEM…LQDN), 274–323 (DENR…CLML), 325–363 (SNRERFLKGEGLQLMNLMLREKKISRSSALKVLDHAMIG), and 364–417 (PEGT…LLRN). Serine 389 is modified (phosphoserine). A coiled-coil region spans residues 476 to 540 (DIEDEFYLRR…HIIKEYAENI (65 aa)). Serine 545 is subject to Phosphoserine.

Component of the PRP19-CDC5L splicing complex composed of a core complex comprising a homotetramer of PRPF19, CDC5L, PLRG1 and BCAS2, and at least three less stably associated proteins CTNNBL1, CWC15 and HSPA8. Interacts directly with CWC15 and CDC5L in the complex. Interacts with AICDA; the interaction is important for the antibody diversification activity of AICDA. Interacts with PRPF31 (via its NLS). Interacts (via its N-terminal NLS) with KPNA1 and KPNA2.

The protein resides in the nucleus. Functionally, component of the PRP19-CDC5L complex that forms an integral part of the spliceosome and is required for activating pre-mRNA splicing. Participates in AID/AICDA-mediated somatic hypermutation (SHM) and class-switch recombination (CSR), 2 processes resulting in the production of high-affinity, mutated isotype-switched antibodies. The sequence is that of Beta-catenin-like protein 1 (CTNNBL1) from Bos taurus (Bovine).